Reading from the N-terminus, the 958-residue chain is Translation initiation factor IF-2 (958 aa).

Disordered stretches follow at residues 67 to 95 (APAA…APAP) and 111 to 355 (PAPA…VPRG). Residues 75–95 (APAPGPAAPKAPAPAPAAPAP) show a composition bias toward pro residues. A compositionally biased stretch (low complexity) spans 140-161 (PAPARQGGQAPRPGGPRPGNNP). A compositionally biased stretch (basic and acidic residues) spans 195–206 (RGERRNDGERPG). Over residues 209–221 (RPAAGAGGPRPAA) the composition is skewed to low complexity. A compositionally biased stretch (pro residues) spans 228-241 (PGAPRPGAPRPGAP). Residues 268-325 (GGAGRPGGAGRPGGGPGRPGGAPGAGTGGGAPAGGGFGKGGRGRGGTQGAFGKGGAGR) are compositionally biased toward gly residues. Positions 326 to 335 (GKQRKSKRAK) are enriched in basic residues. The 172-residue stretch at 450-621 (ARAPVVTVMG…AVLLTADAAL (172 aa)) folds into the tr-type G domain. A G1 region spans residues 459 to 466 (GHVDHGKT). GTP is bound at residue 459 to 466 (GHVDHGKT). Positions 484–488 (GITQH) are G2. Residues 509-512 (DTPG) are G3. Residues 509–513 (DTPGH) and 563–566 (NKID) contribute to the GTP site. The segment at 563–566 (NKID) is G4. The G5 stretch occupies residues 599-601 (SAR).

This sequence belongs to the TRAFAC class translation factor GTPase superfamily. Classic translation factor GTPase family. IF-2 subfamily.

Its subcellular location is the cytoplasm. One of the essential components for the initiation of protein synthesis. Protects formylmethionyl-tRNA from spontaneous hydrolysis and promotes its binding to the 30S ribosomal subunits. Also involved in the hydrolysis of GTP during the formation of the 70S ribosomal complex. This is Translation initiation factor IF-2 from Paenarthrobacter aurescens (strain TC1).